The chain runs to 122 residues: UPF0102 protein CKL_1410 (122 aa).

It belongs to the UPF0102 family.

The sequence is that of UPF0102 protein CKL_1410 from Clostridium kluyveri (strain ATCC 8527 / DSM 555 / NBRC 12016 / NCIMB 10680 / K1).